A 330-amino-acid polypeptide reads, in one-letter code: Flotillin-like protein FloA (330 aa).

2 helical membrane passes run 6 to 26 (LLLFVIIAAGLIVLSIFFTFV) and 28 to 48 (VMLWISALAAGVRVSIFTLVG).

Belongs to the flotillin-like FloA family. Homooligomerizes.

The protein resides in the cell membrane. It localises to the membrane raft. Functionally, found in functional membrane microdomains (FMM) that may be equivalent to eukaryotic membrane rafts. FMMs are highly dynamic and increase in number as cells age. Flotillins are thought to be important factors in membrane fluidity. In Bacillus pumilus (strain SAFR-032), this protein is Flotillin-like protein FloA.